Reading from the N-terminus, the 241-residue chain is GTP cyclohydrolase 1 type 2 homolog (241 aa).

A divalent metal cation-binding residues include His62, His63, Asp101, His207, and Glu211.

Belongs to the GTP cyclohydrolase I type 2/NIF3 family. As to quaternary structure, homohexamer.

This chain is GTP cyclohydrolase 1 type 2 homolog, found in Campylobacter jejuni subsp. jejuni serotype O:2 (strain ATCC 700819 / NCTC 11168).